Consider the following 126-residue polypeptide: Anti-adapter protein IraD (126 aa).

This sequence belongs to the GpW/Gp25 family. IraD subfamily. In terms of assembly, interacts with RssB.

Its subcellular location is the cytoplasm. Its function is as follows. Inhibits RpoS proteolysis by regulating RssB activity, thereby increasing the stability of the sigma stress factor RpoS during oxidative stress. Its effect on RpoS stability is due to its interaction with RssB, which probably blocks the interaction of RssB with RpoS, and the consequent delivery of the RssB-RpoS complex to the ClpXP protein degradation pathway. This chain is Anti-adapter protein IraD, found in Salmonella choleraesuis (strain SC-B67).